Here is a 223-residue protein sequence, read N- to C-terminus: Ribose-5-phosphate isomerase A (223 aa).

Residues 28–31, 81–84, and 94–97 each bind substrate; these read TGTT, DSAD, and KGGG. E103 (proton acceptor) is an active-site residue. K121 serves as a coordination point for substrate.

This sequence belongs to the ribose 5-phosphate isomerase family. In terms of assembly, homodimer.

It catalyses the reaction aldehydo-D-ribose 5-phosphate = D-ribulose 5-phosphate. Its pathway is carbohydrate degradation; pentose phosphate pathway; D-ribose 5-phosphate from D-ribulose 5-phosphate (non-oxidative stage): step 1/1. Its function is as follows. Catalyzes the reversible conversion of ribose-5-phosphate to ribulose 5-phosphate. This Buchnera aphidicola subsp. Acyrthosiphon pisum (strain 5A) protein is Ribose-5-phosphate isomerase A.